The following is a 301-amino-acid chain: Acetylglutamate kinase (301 aa).

Substrate is bound by residues 72–73, Arg94, and Asn199; that span reads GG.

The protein belongs to the acetylglutamate kinase family. ArgB subfamily.

It is found in the cytoplasm. It catalyses the reaction N-acetyl-L-glutamate + ATP = N-acetyl-L-glutamyl 5-phosphate + ADP. The protein operates within amino-acid biosynthesis; L-arginine biosynthesis; N(2)-acetyl-L-ornithine from L-glutamate: step 2/4. Its function is as follows. Catalyzes the ATP-dependent phosphorylation of N-acetyl-L-glutamate. This Bartonella quintana (strain Toulouse) (Rochalimaea quintana) protein is Acetylglutamate kinase.